Consider the following 293-residue polypeptide: Undecaprenyl-diphosphatase (293 aa).

5 helical membrane-spanning segments follow: residues 107–127, 134–154, 207–227, 243–263, and 268–288; these read WMII…KDLI, MWIT…AEKV, FSFL…LPDA, IGTL…MKFV, and FSWF…LLWL.

Belongs to the UppP family.

The protein resides in the cell membrane. The enzyme catalyses di-trans,octa-cis-undecaprenyl diphosphate + H2O = di-trans,octa-cis-undecaprenyl phosphate + phosphate + H(+). In terms of biological role, catalyzes the dephosphorylation of undecaprenyl diphosphate (UPP). Confers resistance to bacitracin. This chain is Undecaprenyl-diphosphatase, found in Corynebacterium efficiens (strain DSM 44549 / YS-314 / AJ 12310 / JCM 11189 / NBRC 100395).